The sequence spans 190 residues: Segregation and condensation protein B (190 aa).

The protein belongs to the ScpB family. Homodimer. Homodimerization may be required to stabilize the binding of ScpA to the Smc head domains. Component of a cohesin-like complex composed of ScpA, ScpB and the Smc homodimer, in which ScpA and ScpB bind to the head domain of Smc. The presence of the three proteins is required for the association of the complex with DNA.

It is found in the cytoplasm. Its function is as follows. Participates in chromosomal partition during cell division. May act via the formation of a condensin-like complex containing Smc and ScpA that pull DNA away from mid-cell into both cell halves. This is Segregation and condensation protein B from Bacillus cereus (strain ATCC 14579 / DSM 31 / CCUG 7414 / JCM 2152 / NBRC 15305 / NCIMB 9373 / NCTC 2599 / NRRL B-3711).